The primary structure comprises 227 residues: MEGQSGRCKIVVVGDAECGKTALLQVFAKDAYPGSYVPTVFENYTASFEIDKRRIELNMWDTSGSSYYDNVRPLAYPDSDAVLICFDISRPETLDSVLKKWQGETQEFCPNAKVVLVGCKLDMRTDLATLRELSKQRLIPVTHEQGTVLAKQVGAVSYVECSSRSSERSVRDVFHVATVASLGRGHRQLRRTDSRRGLQRSTQLSGRPDRGNEGEMHKDRAKSCNLM.

Residue 14–21 (GDAECGKT) coordinates GTP. The Effector region signature appears at 36 to 44 (YVPTVFENY). Residues 61 to 65 (DTSGS) and 119 to 122 (CKLD) contribute to the GTP site. Residues 186–227 (HRQLRRTDSRRGLQRSTQLSGRPDRGNEGEMHKDRAKSCNLM) form a disordered region. Over residues 207–227 (RPDRGNEGEMHKDRAKSCNLM) the composition is skewed to basic and acidic residues. C224 carries the post-translational modification Cysteine methyl ester. The S-geranylgeranyl cysteine moiety is linked to residue C224. A propeptide spans 225–227 (NLM) (removed in mature form).

It belongs to the small GTPase superfamily. Rho family. In terms of assembly, interacts with the Rho-GAP domain of RACGAP1. Interacts with UBXD5. Interacts with PRAG1. In terms of tissue distribution, expressed specifically in neurons in the brain and spinal cord and also in hepatic stellate cells.

It localises to the cytoplasmic vesicle. Its subcellular location is the secretory vesicle. The protein localises to the acrosome membrane. Functionally, may be specifically involved in neuronal and hepatic functions. Is a C3 toxin-insensitive member of the Rho subfamily. This chain is Rho-related GTP-binding protein RhoN (Rnd2), found in Mus musculus (Mouse).